The following is a 190-amino-acid chain: Nucleoside triphosphate pyrophosphatase (190 aa).

Catalysis depends on Asp69, which acts as the Proton acceptor.

It belongs to the Maf family. It depends on a divalent metal cation as a cofactor.

Its subcellular location is the cytoplasm. The catalysed reaction is a ribonucleoside 5'-triphosphate + H2O = a ribonucleoside 5'-phosphate + diphosphate + H(+). The enzyme catalyses a 2'-deoxyribonucleoside 5'-triphosphate + H2O = a 2'-deoxyribonucleoside 5'-phosphate + diphosphate + H(+). In terms of biological role, nucleoside triphosphate pyrophosphatase. May have a dual role in cell division arrest and in preventing the incorporation of modified nucleotides into cellular nucleic acids. This Helicobacter pylori (strain J99 / ATCC 700824) (Campylobacter pylori J99) protein is Nucleoside triphosphate pyrophosphatase.